Here is a 287-residue protein sequence, read N- to C-terminus: Formamidopyrimidine-DNA glycosylase (287 aa).

Proline 2 acts as the Schiff-base intermediate with DNA in catalysis. Residue glutamate 3 is the Proton donor of the active site. Lysine 58 acts as the Proton donor; for beta-elimination activity in catalysis. Histidine 104, arginine 123, and arginine 166 together coordinate DNA. The FPG-type zinc finger occupies 251 to 287 (RVYDREGQPCPTPGCKGMIGREVQAGRSTFFCPVCQV). The active-site Proton donor; for delta-elimination activity is arginine 277.

Belongs to the FPG family. As to quaternary structure, monomer. The cofactor is Zn(2+).

The catalysed reaction is Hydrolysis of DNA containing ring-opened 7-methylguanine residues, releasing 2,6-diamino-4-hydroxy-5-(N-methyl)formamidopyrimidine.. The enzyme catalyses 2'-deoxyribonucleotide-(2'-deoxyribose 5'-phosphate)-2'-deoxyribonucleotide-DNA = a 3'-end 2'-deoxyribonucleotide-(2,3-dehydro-2,3-deoxyribose 5'-phosphate)-DNA + a 5'-end 5'-phospho-2'-deoxyribonucleoside-DNA + H(+). In terms of biological role, involved in base excision repair of DNA damaged by oxidation or by mutagenic agents. Acts as a DNA glycosylase that recognizes and removes damaged bases. Has a preference for oxidized purines, such as 7,8-dihydro-8-oxoguanine (8-oxoG). Has AP (apurinic/apyrimidinic) lyase activity and introduces nicks in the DNA strand. Cleaves the DNA backbone by beta-delta elimination to generate a single-strand break at the site of the removed base with both 3'- and 5'-phosphates. The polypeptide is Formamidopyrimidine-DNA glycosylase (Caulobacter sp. (strain K31)).